The chain runs to 184 residues: Luciferin-binding protein (184 aa).

4 EF-hand domains span residues Y10–I45, A46–A81, M98–D133, and I134–G169. D111, D113, D115, Y117, E122, D147, N149, N151, Q153, and E158 together coordinate Ca(2+).

This Ca(2+)-dependent protein binds to luciferin. The luciferin of LBP is capable of reacting with luciferase and O(2) only when calcium is bound. This Renilla reniformis (Sea pansy) protein is Luciferin-binding protein.